We begin with the raw amino-acid sequence, 376 residues long: Heme chaperone HemW (376 aa).

In terms of domain architecture, Radical SAM core spans 1–233 (MFTLPPISLY…DKLLKKAGYK (233 aa)). Tyr-10 contacts S-adenosyl-L-methionine. Positions 16, 20, and 23 each coordinate [4Fe-4S] cluster. S-adenosyl-L-methionine is bound by residues Gly-66, 67-68 (GT), Glu-99, Gln-126, Arg-138, and Asp-162.

The protein belongs to the anaerobic coproporphyrinogen-III oxidase family. HemW subfamily. The cofactor is [4Fe-4S] cluster.

It is found in the cytoplasm. Functionally, probably acts as a heme chaperone, transferring heme to an unknown acceptor. Binds one molecule of heme per monomer, possibly covalently. Binds 1 [4Fe-4S] cluster. The cluster is coordinated with 3 cysteines and an exchangeable S-adenosyl-L-methionine. The chain is Heme chaperone HemW from Buchnera aphidicola subsp. Acyrthosiphon pisum (strain APS) (Acyrthosiphon pisum symbiotic bacterium).